The following is a 52-amino-acid chain: Keratin-associated protein 19-2 (52 aa).

Belongs to the KRTAP type 19 family. In terms of assembly, interacts with hair keratins.

Functionally, in the hair cortex, hair keratin intermediate filaments are embedded in an interfilamentous matrix, consisting of hair keratin-associated proteins (KRTAP), which are essential for the formation of a rigid and resistant hair shaft through their extensive disulfide bond cross-linking with abundant cysteine residues of hair keratins. The matrix proteins include the high-sulfur and high-glycine-tyrosine keratins. The polypeptide is Keratin-associated protein 19-2 (KRTAP19-2) (Homo sapiens (Human)).